The sequence spans 298 residues: Cyclic dof factor 1 (298 aa).

Residues 27–46 are disordered; the sequence is EEEEKNQNKTLTDQSEKDKT. The segment at 54-108 adopts a Dof-type zinc-finger fold; the sequence is LPCPRCNSMETKFCYYNNYNVNQPRHFCKACQRYWTSGGTMRSVPIGAGRRKNKN. 4 residues coordinate Zn(2+): C56, C59, C81, and C84. The disordered stretch occupies residues 200-231; sequence SSSPTSTLGKHSRDEDETVKQKQRNGSVLVPK. Residues 210–219 show a composition bias toward basic and acidic residues; sequence HSRDEDETVK.

As to quaternary structure, interacts with ADO2 (via kelch repeats), ADO3 (via kelch repeats) and GI (via N-terminus). In terms of processing, ubiquitinated. In terms of tissue distribution, expressed in the vascular tissues of cotyledons, leaves and hypocotyls and in stomata. Not detected in roots.

It is found in the nucleus. In terms of biological role, transcription factor that binds specifically to a 5'-AA[AG]G-3' consensus core sequence. A flanking TGT sequence contributes to the specificity of binding. Regulates a photoperiodic flowering response. Transcriptional repressor of 'CONSTANS' expression. The DNA-binding ability is not modulated by 'GIGANTEA' but the stability of CDF1 is controlled by the proteasome-dependent pathway. Ubiquitinated by the SCF(ADO3) E3 ubiquitin ligase complex. Binds to the FT promoter in the morning. The polypeptide is Cyclic dof factor 1 (CDF1) (Arabidopsis thaliana (Mouse-ear cress)).